We begin with the raw amino-acid sequence, 247 residues long: Probable transcriptional regulatory protein Tola_2714 (247 aa).

Positions 1–21 (MAGHSKWANIKHRKAAQDAKR) are disordered.

It belongs to the TACO1 family.

The protein localises to the cytoplasm. This is Probable transcriptional regulatory protein Tola_2714 from Tolumonas auensis (strain DSM 9187 / NBRC 110442 / TA 4).